Here is a 218-residue protein sequence, read N- to C-terminus: UPF0502 protein Shewana3_1622 (218 aa).

Belongs to the UPF0502 family.

The polypeptide is UPF0502 protein Shewana3_1622 (Shewanella sp. (strain ANA-3)).